Reading from the N-terminus, the 494-residue chain is 4-trimethylaminobutyraldehyde dehydrogenase (494 aa).

S2 is subject to N-acetylserine. An N6-acetyllysine; alternate modification is found at K30. K30 carries the N6-succinyllysine; alternate modification. K59 bears the N6-succinyllysine mark. Residues K180 and 232-236 (GSVPT) each bind NAD(+). E254 functions as the Proton acceptor in the catalytic mechanism. C288 acts as the Nucleophile in catalysis. Residue K298 is modified to N6-acetyllysine. E391 provides a ligand contact to NAD(+).

The protein belongs to the aldehyde dehydrogenase family. As to quaternary structure, homotetramer. In terms of tissue distribution, detected in lever (at protein level).

It is found in the cytoplasm. The protein resides in the cytosol. It catalyses the reaction 4-(trimethylamino)butanal + NAD(+) + H2O = 4-(trimethylamino)butanoate + NADH + 2 H(+). It carries out the reaction an aldehyde + NAD(+) + H2O = a carboxylate + NADH + 2 H(+). The catalysed reaction is 4-aminobutanal + NAD(+) + H2O = 4-aminobutanoate + NADH + 2 H(+). The enzyme catalyses formaldehyde + NAD(+) + H2O = formate + NADH + 2 H(+). It catalyses the reaction acetaldehyde + NAD(+) + H2O = acetate + NADH + 2 H(+). It carries out the reaction imidazole-4-acetaldehyde + NAD(+) + H2O = imidazole-4-acetate + NADH + 2 H(+). The catalysed reaction is acrolein + NAD(+) + H2O = acrylate + NADH + 2 H(+). The enzyme catalyses (5-hydroxyindol-3-yl)acetaldehyde + NAD(+) + H2O = (5-hydroxyindol-3-yl)acetate + NADH + 2 H(+). It catalyses the reaction 3,4-dihydroxyphenylacetaldehyde + NAD(+) + H2O = 3,4-dihydroxyphenylacetate + NADH + 2 H(+). It carries out the reaction spermine monoaldehyde + NAD(+) + H2O = N-(2-carboxyethyl)spermidine + NADH + 2 H(+). The catalysed reaction is propanal + NAD(+) + H2O = propanoate + NADH + 2 H(+). The enzyme catalyses butanal + NAD(+) + H2O = butanoate + NADH + 2 H(+). It catalyses the reaction pentanal + NAD(+) + H2O = pentanoate + NADH + 2 H(+). It carries out the reaction hexanal + NAD(+) + H2O = hexanoate + NADH + 2 H(+). It participates in amine and polyamine biosynthesis; carnitine biosynthesis. Functionally, converts gamma-trimethylaminobutyraldehyde into gamma-butyrobetaine with high efficiency (in vitro). Can catalyze the irreversible oxidation of a broad range of aldehydes to the corresponding acids in an NAD-dependent reaction, but with low efficiency. Catalyzes the oxidation of aldehydes arising from biogenic amines and polyamines. This Rattus norvegicus (Rat) protein is 4-trimethylaminobutyraldehyde dehydrogenase (Aldh9a1).